The following is a 316-amino-acid chain: MAEVKVKVQPPDADPVEIENRIIELCHQFPHGITDQVIQNEMPHIEAQQRAVAINRLLSMGQLDLLRSNTGLLYRIKDSQNAGKMKGSDNQEKLVYQIIEDAGNKGIWSRDIRYKSNLPLTEINKILKNLESKKLIKAVKSVAASKKKVYMLYNLQPDRSVTGGAWYSDQDFESEFVEVLNQQCFKFLQNKAETARESKQNPMIQRNSSFASSHEVWKYICELGISKVELSMEDIETILNTLIYDGKVEMTIIAAKEGTVGSVDGHMKLYRAVSPIIPPTGLVRAPCGLCPVFDDCHEGGEISPSNCIYMTEWLEF.

Residue A2 is modified to N-acetylalanine. Glycyl lysine isopeptide (Lys-Gly) (interchain with G-Cter in SUMO2) cross-links involve residues K5 and K7. Residues C287, C290, C296, and C307 each coordinate [4Fe-4S] cluster.

The protein belongs to the eukaryotic RPC34/RPC39 RNA polymerase subunit family. As to quaternary structure, component of the RNA polymerase III complex consisting of 17 subunits: a ten-subunit horseshoe-shaped catalytic core composed of POLR3A/RPC1, POLR3B/RPC2, POLR1C/RPAC1, POLR1D/RPAC2, POLR3K/RPC10, POLR2E/RPABC1, POLR2F/RPABC2, POLR2H/RPABC3, POLR2K/RPABC4 and POLR2L/RPABC5; a mobile stalk composed of two subunits POLR3H/RPC8 and CRCP/RPC9, protruding from the core and functioning primarily in transcription initiation; and additional subunits homologous to general transcription factors of the RNA polymerase II machinery, POLR3C/RPC3-POLR3F/RPC6-POLR3G/RPC7 heterotrimer required for transcription initiation and POLR3D/RPC4-POLR3E/RPC5 heterodimer involved in both transcription initiation and termination. Directly interacts with POLR3C. Interacts with TBP and TFIIIB90 and GTF3C4. Interacts with MAF1. As part of the RNA polymerase III complex, interacts with PKP2.

It is found in the nucleus. Functionally, DNA-dependent RNA polymerase catalyzes the transcription of DNA into RNA using the four ribonucleoside triphosphates as substrates. Specific peripheric component of RNA polymerase III (Pol III) which synthesizes small non-coding RNAs including 5S rRNA, snRNAs, tRNAs and miRNAs from at least 500 distinct genomic loci. Part of POLR3C/RPC3-POLR3F/RPC6-POLR3G/RPC7 heterotrimer that coordinates the dynamics of Pol III stalk and clamp modules during the transition from apo to elongation state. Pol III plays a key role in sensing and limiting infection by intracellular bacteria and DNA viruses, including varicella zoster virus. Acts as a nuclear and cytosolic DNA sensor detecting AT-rich DNA, involved in innate immune response. Can sense non-self dsDNA that serves as template for transcription into dsRNA. The non-self RNA polymerase III transcripts, such as Epstein-Barr virus-encoded RNAs (EBERs) induce type I interferon and NF-kappa-B through the RIG-I pathway. Preferentially binds double-stranded DNA (dsDNA). The protein is DNA-directed RNA polymerase III subunit RPC6 (POLR3F) of Bos taurus (Bovine).